A 218-amino-acid polypeptide reads, in one-letter code: Probable nicotinate-nucleotide adenylyltransferase (218 aa).

Belongs to the NadD family.

The enzyme catalyses nicotinate beta-D-ribonucleotide + ATP + H(+) = deamido-NAD(+) + diphosphate. The protein operates within cofactor biosynthesis; NAD(+) biosynthesis; deamido-NAD(+) from nicotinate D-ribonucleotide: step 1/1. In terms of biological role, catalyzes the reversible adenylation of nicotinate mononucleotide (NaMN) to nicotinic acid adenine dinucleotide (NaAD). This chain is Probable nicotinate-nucleotide adenylyltransferase, found in Acidithiobacillus ferrooxidans (strain ATCC 23270 / DSM 14882 / CIP 104768 / NCIMB 8455) (Ferrobacillus ferrooxidans (strain ATCC 23270)).